A 294-amino-acid chain; its full sequence is Mating type protein mtA-1 (294 aa).

The segment at residues 46-101 is a DNA-binding region (alpha box); that stretch reads TAKKKVNGFMGFRSNYSPLFSYLPQKMRSPFMTILWQYDPYHNEWDFMCSVYSSIR.

The protein belongs to the MATALPHA1 family.

Its subcellular location is the nucleus. Its function is as follows. Mating type proteins are sequence specific DNA-binding proteins that act as master switches in fungal differentiation by controlling gene expression in a cell type-specific fashion. Transcriptional activator that induces the transcription of alpha-specific genes. This Sordaria equina protein is Mating type protein mtA-1 (MTA1).